We begin with the raw amino-acid sequence, 710 residues long: Integrator complex subunit 10 (710 aa).

Phosphoserine is present on residues Ser-231, Ser-381, and Ser-382. A Glycyl lysine isopeptide (Lys-Gly) (interchain with G-Cter in SUMO2) cross-link involves residue Lys-464.

The protein belongs to the Integrator subunit 10 family. As to quaternary structure, component of the Integrator complex, composed of core subunits INTS1, INTS2, INTS3, INTS4, INTS5, INTS6, INTS7, INTS8, INTS9/RC74, INTS10, INTS11/CPSF3L, INTS12, INTS13, INTS14 and INTS15. The core complex associates with protein phosphatase 2A subunits PPP2CA and PPP2R1A, to form the Integrator-PP2A (INTAC) complex. INTS10 is part of the tail subcomplex, composed of INTS10, INTS13, INTS14 and INTS15.

It is found in the nucleus. In terms of biological role, component of the integrator complex, a multiprotein complex that terminates RNA polymerase II (Pol II) transcription in the promoter-proximal region of genes. The integrator complex provides a quality checkpoint during transcription elongation by driving premature transcription termination of transcripts that are unfavorably configured for transcriptional elongation: the complex terminates transcription by (1) catalyzing dephosphorylation of the C-terminal domain (CTD) of Pol II subunit POLR2A/RPB1 and SUPT5H/SPT5, (2) degrading the exiting nascent RNA transcript via endonuclease activity and (3) promoting the release of Pol II from bound DNA. The integrator complex is also involved in terminating the synthesis of non-coding Pol II transcripts, such as enhancer RNAs (eRNAs), small nuclear RNAs (snRNAs), telomerase RNAs and long non-coding RNAs (lncRNAs). Within the integrator complex, INTS10 is part of the integrator tail module that acts as a platform for the recruitment of transcription factors at promoters. May be not involved in the recruitment of cytoplasmic dynein to the nuclear envelope, probably as component of the integrator complex. The chain is Integrator complex subunit 10 (Ints10) from Mus musculus (Mouse).